A 454-amino-acid polypeptide reads, in one-letter code: MKTIIEPFRIKSVEPIRMTTREERARLLEAAGFNLFKLHSDDVIIDLLTDSGTSAMSAAQWGAVMTGDESYAGAPSFYRFEAAVKDLMDFTHIIPAHQGRAAEHLLFSLIAKTGDLIPSNTHFDTTRGNIEAMGAEALDLPIAEGRVPSLDHPFKGNMDLAALERVLTEEGGRIPAVMMTITNNAGGGQPVSLENIRGAARLAKAHGKAFYIDGCRFAENAWFIKLREEGQKDRSIKEIVRETFALADGMTMSAKKDAFANIGGWLALNNDALAERARTLLIQTEGFPTYGGLAGRDLDAIAQGLKEIIDEDYLRYRVRTNAYIAERLDAMGVPVVKPAGGHAVFIDARAFLPHIPPLEYPGQALTCAMYETGGIRACEIGTVMFGRKPDGTEAPGAMDLVRLAMPRRVYTQSHADYVVEVLEDVAATKDTLKGLRIVKEPPMMRHFTAAFERL.

An N6-(pyridoxal phosphate)lysine modification is found at lysine 256.

This sequence belongs to the beta-eliminating lyase family. In terms of assembly, homotetramer. It depends on pyridoxal 5'-phosphate as a cofactor.

It catalyses the reaction L-tryptophan + H2O = indole + pyruvate + NH4(+). Its pathway is amino-acid degradation; L-tryptophan degradation via pyruvate pathway; indole and pyruvate from L-tryptophan: step 1/1. In Hyphomonas neptunium (strain ATCC 15444), this protein is Tryptophanase.